The following is a 399-amino-acid chain: Insertion element IS900 uncharacterized 42 kDa protein (399 aa).

Belongs to the transposase IS1111A/IS1328/IS1533 family.

The chain is Insertion element IS900 uncharacterized 42 kDa protein from Mycobacterium paratuberculosis.